Reading from the N-terminus, the 1056-residue chain is Isoleucine--tRNA ligase (1056 aa).

The 'HIGH' region signature appears at P56–H66. A 'KMSKS' region motif is present at residues K603–S607. ATP is bound at residue K606.

This sequence belongs to the class-I aminoacyl-tRNA synthetase family. IleS type 2 subfamily. In terms of assembly, monomer. Requires Zn(2+) as cofactor.

The protein resides in the cytoplasm. The catalysed reaction is tRNA(Ile) + L-isoleucine + ATP = L-isoleucyl-tRNA(Ile) + AMP + diphosphate. Its function is as follows. Catalyzes the attachment of isoleucine to tRNA(Ile). As IleRS can inadvertently accommodate and process structurally similar amino acids such as valine, to avoid such errors it has two additional distinct tRNA(Ile)-dependent editing activities. One activity is designated as 'pretransfer' editing and involves the hydrolysis of activated Val-AMP. The other activity is designated 'posttransfer' editing and involves deacylation of mischarged Val-tRNA(Ile). In Bdellovibrio bacteriovorus (strain ATCC 15356 / DSM 50701 / NCIMB 9529 / HD100), this protein is Isoleucine--tRNA ligase.